The sequence spans 173 residues: Crossover junction endodeoxyribonuclease RuvC (173 aa).

Catalysis depends on residues Asp-8, Glu-67, and Asp-139. 3 residues coordinate Mg(2+): Asp-8, Glu-67, and Asp-139.

The protein belongs to the RuvC family. As to quaternary structure, homodimer which binds Holliday junction (HJ) DNA. The HJ becomes 2-fold symmetrical on binding to RuvC with unstacked arms; it has a different conformation from HJ DNA in complex with RuvA. In the full resolvosome a probable DNA-RuvA(4)-RuvB(12)-RuvC(2) complex forms which resolves the HJ. The cofactor is Mg(2+).

It is found in the cytoplasm. It carries out the reaction Endonucleolytic cleavage at a junction such as a reciprocal single-stranded crossover between two homologous DNA duplexes (Holliday junction).. In terms of biological role, the RuvA-RuvB-RuvC complex processes Holliday junction (HJ) DNA during genetic recombination and DNA repair. Endonuclease that resolves HJ intermediates. Cleaves cruciform DNA by making single-stranded nicks across the HJ at symmetrical positions within the homologous arms, yielding a 5'-phosphate and a 3'-hydroxyl group; requires a central core of homology in the junction. The consensus cleavage sequence is 5'-(A/T)TT(C/G)-3'. Cleavage occurs on the 3'-side of the TT dinucleotide at the point of strand exchange. HJ branch migration catalyzed by RuvA-RuvB allows RuvC to scan DNA until it finds its consensus sequence, where it cleaves and resolves the cruciform DNA. This Shewanella baltica (strain OS223) protein is Crossover junction endodeoxyribonuclease RuvC.